Consider the following 963-residue polypeptide: Phosphoenolpyruvate carboxylase 2 (963 aa).

Residue S11 is modified to Phosphoserine. Residues H172 and K599 contribute to the active site. Residue S701 is modified to Phosphoserine.

Belongs to the PEPCase type 1 family. In terms of assembly, homotetramer. Mg(2+) is required as a cofactor. As to expression, expressed in all plant organs, with higher levels in stems and leaves.

It is found in the cytoplasm. It catalyses the reaction oxaloacetate + phosphate = phosphoenolpyruvate + hydrogencarbonate. With respect to regulation, by light-reversible phosphorylation. In terms of biological role, through the carboxylation of phosphoenolpyruvate (PEP) it forms oxaloacetate, a four-carbon dicarboxylic acid source for the tricarboxylic acid cycle. This Arabidopsis thaliana (Mouse-ear cress) protein is Phosphoenolpyruvate carboxylase 2 (PPC2).